The sequence spans 358 residues: Peptide chain release factor 1 (358 aa).

At Q234 the chain carries N5-methylglutamine. The segment at 283-306 is disordered; it reads ERLHSERAGQRKSMVGSGDRSERI.

Belongs to the prokaryotic/mitochondrial release factor family. Post-translationally, methylated by PrmC. Methylation increases the termination efficiency of RF1.

It is found in the cytoplasm. Its function is as follows. Peptide chain release factor 1 directs the termination of translation in response to the peptide chain termination codons UAG and UAA. The polypeptide is Peptide chain release factor 1 (Zymomonas mobilis subsp. mobilis (strain ATCC 31821 / ZM4 / CP4)).